The chain runs to 173 residues: Inorganic pyrophosphatase (173 aa).

Residues Lys28, Arg42, and Tyr54 each coordinate substrate. Mg(2+) is bound by residues Asp64, Asp69, and Asp101. Tyr140 lines the substrate pocket.

Belongs to the PPase family. Homohexamer. Mg(2+) serves as cofactor.

The protein resides in the cytoplasm. It carries out the reaction diphosphate + H2O = 2 phosphate + H(+). Functionally, catalyzes the hydrolysis of inorganic pyrophosphate (PPi) forming two phosphate ions. The polypeptide is Inorganic pyrophosphatase (Helicobacter pylori (strain ATCC 700392 / 26695) (Campylobacter pylori)).